Here is a 360-residue protein sequence, read N- to C-terminus: Phospho-N-acetylmuramoyl-pentapeptide-transferase (360 aa).

10 helical membrane-spanning segments follow: residues 16–36 (FAVFQYLTLRGILGVLTALVL), 73–93 (TMGGALILSSIGVSTLLWADL), 97–117 (YVWVVLLVTLLFGAIGWVDDY), 134–154 (YFWQSVFGLGAAIFLYMTAST), 168–188 (YSIPLGAGFIVLTYFVIVGSS), 199–219 (GLAIMPTVMVGGGLGIFCYLS), 236–256 (AGELIVFCGALIGAGLGFLWF), 263–283 (VFMGDVGALALGAALGTIAVI), 288–308 (IVLFIMGGVFVMETLSVVIQV), and 338–358 (VIVRFWIITVILVLIGLATLK).

This sequence belongs to the glycosyltransferase 4 family. MraY subfamily. Mg(2+) is required as a cofactor.

The protein localises to the cell inner membrane. It carries out the reaction UDP-N-acetyl-alpha-D-muramoyl-L-alanyl-gamma-D-glutamyl-meso-2,6-diaminopimeloyl-D-alanyl-D-alanine + di-trans,octa-cis-undecaprenyl phosphate = di-trans,octa-cis-undecaprenyl diphospho-N-acetyl-alpha-D-muramoyl-L-alanyl-D-glutamyl-meso-2,6-diaminopimeloyl-D-alanyl-D-alanine + UMP. Its pathway is cell wall biogenesis; peptidoglycan biosynthesis. Its function is as follows. Catalyzes the initial step of the lipid cycle reactions in the biosynthesis of the cell wall peptidoglycan: transfers peptidoglycan precursor phospho-MurNAc-pentapeptide from UDP-MurNAc-pentapeptide onto the lipid carrier undecaprenyl phosphate, yielding undecaprenyl-pyrophosphoryl-MurNAc-pentapeptide, known as lipid I. The polypeptide is Phospho-N-acetylmuramoyl-pentapeptide-transferase (Pseudomonas fluorescens (strain Pf0-1)).